A 67-amino-acid polypeptide reads, in one-letter code: Guanine nucleotide-binding protein G(I)/G(S)/G(O) subunit gamma-13 (67 aa).

At C64 the chain carries Cysteine methyl ester. The S-farnesyl cysteine moiety is linked to residue C64. Residues 65–67 constitute a propeptide, removed in mature form; it reads TIL.

It belongs to the G protein gamma family. In terms of assembly, g proteins are composed of 3 units, alpha, beta and gamma.

The protein localises to the cell membrane. Guanine nucleotide-binding proteins (G proteins) are involved as a modulator or transducer in various transmembrane signaling systems. The beta and gamma chains are required for the GTPase activity, for replacement of GDP by GTP, and for G protein-effector interaction. In Homo sapiens (Human), this protein is Guanine nucleotide-binding protein G(I)/G(S)/G(O) subunit gamma-13 (GNG13).